The chain runs to 170 residues: CFA/I fimbrial subunit B (170 aa).

A signal peptide spans 1–23 (MKFKKTIGAMALTTMFVAVSASA).

The protein belongs to the fimbrial CS1 protein family. As to quaternary structure, CFA/I fimbriae are rather rigid, thread-like filaments of 0.5-1 micrometer, with an apparent axial hole, and a diameter of 7 nanometers. A single CFA/I fimbria consists of about 100 identical protein subunits.

It is found in the fimbrium. Its function is as follows. Fimbriae (also called pili), polar filaments radiating from the surface of the bacterium to a length of 0.5-1.5 micrometers and numbering 100-300 per cell, enable bacteria to colonize the epithelium of specific host organs. This chain is CFA/I fimbrial subunit B (cfaB), found in Escherichia coli.